Here is a 213-residue protein sequence, read N- to C-terminus: Kiwellin (213 aa).

The N-terminal stretch at 1–24 (MAQLALLLLSLFLTLISLAPPGAS) is a signal peptide. 3 disulfide bridges follow: cysteine 28/cysteine 60, cysteine 32/cysteine 44, and cysteine 38/cysteine 49. 4-hydroxyproline is present on residues proline 65 and proline 67. 4 cysteine pairs are disulfide-bonded: cysteine 72–cysteine 90, cysteine 80–cysteine 172, cysteine 119–cysteine 144, and cysteine 166–cysteine 172. The interval 91 to 121 (SPPVTSSTPAKLTNNDFSEGGDDGGPSECDE) is disordered. The segment covering 93–107 (PVTSSTPAKLTNNDF) has biased composition (polar residues).

This sequence belongs to the kiwellin family. Undergoes proteolytic cleavage by actinidin to produce kissper and KiTH. Three forms of KiTH are produced by cleavage at different sites, the main form produced in vivo is KiTH-1.

The protein resides in the secreted. Its function is as follows. pH-dependent, voltage-gated and anion-selective pore-forming peptide. The sequence is that of Kiwellin from Actinidia deliciosa (Kiwi).